A 335-amino-acid polypeptide reads, in one-letter code: Large ribosomal subunit protein uL3 (335 aa).

3 disordered regions span residues 1–35 (MPQPNRPRKGSMGFSPRKRAESEVPRFNSWPADDG), 234–256 (IGNLGPWNPSRVRSTVPQQGQTG), and 312–335 (AVRPNESPRLDPEVRYVSTASNQG). Over residues 244-256 (RVRSTVPQQGQTG) the composition is skewed to polar residues.

Belongs to the universal ribosomal protein uL3 family. As to quaternary structure, part of the 50S ribosomal subunit. Forms a cluster with proteins L14 and L24e.

Its function is as follows. One of the primary rRNA binding proteins, it binds directly near the 3'-end of the 23S rRNA, where it nucleates assembly of the 50S subunit. This Halobacterium salinarum (strain ATCC 29341 / DSM 671 / R1) protein is Large ribosomal subunit protein uL3.